We begin with the raw amino-acid sequence, 162 residues long: Class I hydrophobin 3 (162 aa).

Disulfide bonds link cysteine 36/cysteine 150 and cysteine 151/cysteine 159.

Belongs to the fungal hydrophobin family. Self-assembles to form functional amyloid fibrils called rodlets. Self-assembly into fibrillar rodlets occurs spontaneously at hydrophobic:hydrophilic interfaces and the rodlets further associate laterally to form amphipathic monolayers.

It is found in the secreted. It localises to the cell wall. Aerial growth, conidiation, and dispersal of filamentous fungi in the environment rely upon a capability of their secreting small amphipathic proteins called hydrophobins (HPBs) with low sequence identity. Class I can self-assemble into an outermost layer of rodlet bundles on aerial cell surfaces, conferring cellular hydrophobicity that supports fungal growth, development and dispersal; whereas Class II form highly ordered films at water-air interfaces through intermolecular interactions but contribute nothing to the rodlet structure. This is Class I hydrophobin 3 from Coprinopsis cinerea (strain Okayama-7 / 130 / ATCC MYA-4618 / FGSC 9003) (Inky cap fungus).